Consider the following 770-residue polypeptide: Amyloid-beta precursor protein (770 aa).

An N-terminal signal peptide occupies residues 1–17 (MLPSLALLLLAAWTVRA). The Extracellular segment spans residues 18-701 (LEVPTDGNAG…AEDVGSNKGA (684 aa)). The GFLD subdomain stretch occupies residues 28 to 123 (LLAEPQIAMF…PYRCLVGEFV (96 aa)). An E1 domain is found at 28–189 (LLAEPQIAMF…RGVEFVCCPL (162 aa)). Disulfide bonds link cysteine 38–cysteine 62, cysteine 73–cysteine 117, cysteine 98–cysteine 105, cysteine 133–cysteine 187, cysteine 144–cysteine 174, and cysteine 158–cysteine 186. Position 96 to 110 (96 to 110 (NWCKRGRKQCKTHTH)) interacts with heparin. The tract at residues 131 to 189 (DKCKFLHQERMDVCETHLHWHTVAKETCSEKSTNLHDYGMLLPCGIDKFRGVEFVCCPL) is cuBD subdomain. Residues 135–155 (FLHQERMDVCETHLHWHTVAK) form a copper-binding region. The Cu(2+) site is built by histidine 147, histidine 151, and tyrosine 168. The segment at 181–188 (GVEFVCCP) is zinc-binding. Residues glutamate 183, cysteine 186, and cysteine 187 each coordinate Zn(2+). Residues 196-207 (IDSADAEEDDSD) are compositionally biased toward acidic residues. The disordered stretch occupies residues 196–283 (IDSADAEEDD…TTTTTTTESV (88 aa)). Serine 198 is subject to Phosphoserine; by CK2. Residue serine 206 is modified to Phosphoserine; by CK1. Residues tyrosine 217 and tyrosine 262 each carry the sulfotyrosine modification. Over residues 228–264 (VAEEEEVADVEEEEAEDDEDVEDGDEVEEEAEEPYEE) the composition is skewed to acidic residues. The segment covering 268 to 281 (RTTSIATTTTTTTE) has biased composition (low complexity). Cystine bridges form between cysteine 291-cysteine 341, cysteine 300-cysteine 324, and cysteine 316-cysteine 337. The BPTI/Kunitz inhibitor domain occupies 291–341 (CSEQAETGPCRAMISRWYFDVTEGKCAPFFYGGCGGNRNNFDTEEYCMAVC). Tyrosine 336 bears the Sulfotyrosine mark. The OX-2 signature appears at 344 to 365 (VSSQSLLKTTSEPLPQDPVKLP). The 192-residue stretch at 374–565 (AVDKYLETPG…EEIQDEVDEL (192 aa)) folds into the E2 domain. The heparin-binding stretch occupies residues 391–423 (FQKAKERLEAKHRERMSQVMREWEEAERQAKNL). A Phosphoserine modification is found at serine 441. The tract at residues 491–522 (FNMLKKYVRAEQKDRQHTLKHFEHVRMVDPKK) is heparin-binding. Phosphotyrosine is present on tyrosine 497. The interval 523–540 (AAQIRSQVMTHLRVIYER) is collagen-binding. 2 N-linked (GlcNAc...) asparagine glycosylation sites follow: asparagine 542 and asparagine 571. An O-linked (Xyl...) (chondroitin sulfate) serine; in L-APP isoforms glycan is attached at serine 656. Cu(2+)-binding residues include histidine 677 and histidine 685. 2 residues coordinate Zn(2+): histidine 677 and histidine 685. The interval 695–722 (VGSNKGAIIGLMVGGVVIATVIVITLVM) is interaction with PSEN1. Residues 702-722 (IIGLMVGGVVIATVIVITLVM) form a helical membrane-spanning segment. At 723-770 (LKKKQYTSIHHGVVEVDAAVTPEERHLSKMQQNGYENPTYKFFEQMQN) the chain is on the cytoplasmic side. Residues 724 to 734 (KKKQYTSIHHG) carry the Basolateral sorting signal motif. Threonine 729 is modified (phosphothreonine). Serine 730 carries the phosphoserine; by APP-kinase I modification. Residues 732 to 751 (HHGVVEVDAAVTPEERHLSK) form an interaction with G(o)-alpha region. Threonine 743 bears the Phosphothreonine; by CDK5 and MAPK10 mark. Positions 756-770 (GYENPTYKFFEQMQN) are required for the interaction with KIF5B and for anterograde transport in axons. Tyrosine 757 is subject to Phosphotyrosine; by ABL1. The short motif at 757–762 (YENPTY) is the YENPXY motif; contains endocytosis signal element. A Glycyl lysine isopeptide (Lys-Gly) (interchain with G-Cter in ubiquitin) cross-link involves residue lysine 763.

This sequence belongs to the APP family. In terms of assembly, binds, via its C-terminus, to the PID domain of several cytoplasmic proteins, including APBB family members, the APBA family, MAPK8IP1, SHC1 and NUMB and DAB1. Binding to DAB1 inhibits its serine phosphorylation. Interacts (via NPXY motif) with DAB2 (via PID domain); the interaction is impaired by tyrosine phosphorylation of the NPXY motif. Also interacts with GPCR-like protein BPP, APPBP1, IB1, KNS2 (via its TPR domains), APPBP2 (via BaSS) and DDB1. In vitro, it binds MAPT via the MT-binding domains. Associates with microtubules in the presence of ATP and in a kinesin-dependent manner. Interacts, through a C-terminal domain, with GNAO1. Amyloid-beta protein 42 binds CHRNA7 in hippocampal neurons. Amyloid-beta associates with HADH2. Interacts with CPEB1, ANKS1B and AGER. Interacts with ITM2B. Interacts with ITM2C. Interacts with IDE. Can form homodimers; dimerization is enhanced in the presence of Cu(2+) ions. Can form homodimers; this is promoted by heparin binding. Amyloid-beta protein 40 interacts with S100A9. CTF-alpha product of APP interacts with GSAP. Isoform APP695 interacts with SORL1 (via N-terminal ectodomain); this interaction retains APP in the trans-Golgi network and reduces processing into soluble APP-alpha and amyloid-beta peptides. The C99 fragment also interacts with SORL1. Isoform APP751 interacts with SORL1. Isoform APP770 interacts with SORL1. Interacts with PLD3. Interacts with VDAC1. Interacts with NSG1; could regulate APP processing. Amyloid-beta protein 42 interacts with FPR2. Interacts with SYT7. Interacts (via transmembrane region) with PSEN1; the interaction is direct. Interacts with LRRK2. Interacts (via cytoplasmic domain) with KIF5B. Interacts (via C-terminus) with APBB2/FE65L1 (via C-terminus). Interacts (via intracellular domain) with APBB3. In terms of processing, proteolytically processed under normal cellular conditions. Cleavage either by alpha-secretase, beta-secretase or theta-secretase leads to generation and extracellular release of soluble APP peptides, S-APP-alpha and S-APP-beta, and the retention of corresponding membrane-anchored C-terminal fragments, C80, C83 and C99. Subsequent processing of C80 and C83 by gamma-secretase yields P3 peptides. This is the major secretory pathway and is non-amyloidogenic. Alternatively, presenilin/nicastrin-mediated gamma-secretase processing of C99 releases the amyloid-beta proteins, amyloid-beta protein 40 and amyloid-beta protein 42, major components of amyloid plaques, and the cytotoxic C-terminal fragments, gamma-CTF(50), gamma-CTF(57) and gamma-CTF(59). PSEN1 cleavage is more efficient with C83 than with C99 as substrate (in vitro). Amyloid-beta protein 40 and Amyloid-beta protein 42 are cleaved by ACE. Many other minor amyloid-beta peptides, amyloid-beta 1-X peptides, are found in cerebral spinal fluid (CSF) including the amyloid-beta X-15 peptides, produced from the cleavage by alpha-secretase. Proteolytically cleaved by caspases during neuronal apoptosis. Cleavage at Asp-739 by either caspase-3, -8 or -9 results in the production of the neurotoxic C31 peptide and the increased production of amyloid-beta peptides. Post-translationally, N-glycosylated. In terms of processing, O-glycosylated. O-linkage of chondroitin sulfate to the L-APP isoforms produces the APP proteoglycan core proteins, the appicans. The chondroitin sulfate chain of appicans contains 4-O-sulfated galactose in the linkage region and chondroitin sulfate E in the repeated disaccharide region. Phosphorylation in the C-terminal on tyrosine, threonine and serine residues is neuron-specific. Phosphorylation can affect APP processing, neuronal differentiation and interaction with other proteins. Phosphorylated on Thr-743 in neuronal cells by Cdc5 kinase and Mapk10, in dividing cells by Cdc2 kinase in a cell-cycle dependent manner with maximal levels at the G2/M phase and, in vitro, by GSK-3-beta. The Thr-743 phosphorylated form causes a conformational change which reduces binding of Fe65 family members. In dopaminergic (DA) neurons, phosphorylation on Thr-743 by LRKK2 promotes the production and the nuclear translocation of the APP intracellular domain (AICD) which induces DA neuron apoptosis. Phosphorylation on Tyr-757 is required for SHC binding. Phosphorylated in the extracellular domain by casein kinases on both soluble and membrane-bound APP. This phosphorylation is inhibited by heparin. Post-translationally, extracellular binding and reduction of copper, results in a corresponding oxidation of Cys-144 and Cys-158, and the formation of a disulfide bond. In terms of processing, trophic-factor deprivation triggers the cleavage of surface APP by beta-secretase to release sAPP-beta which is further cleaved to release an N-terminal fragment of APP (N-APP). Amyloid-beta peptides are degraded by IDE. Post-translationally, sulfated on tyrosine residues. As to expression, expressed in the brain. In the brain, non-L-APP isoforms are expressed in neurons, isoform APP695 being the predominant form. In astrocytes and microglial cells, almost 50% is L-isoform (appican).

It localises to the cell membrane. The protein resides in the membrane. It is found in the perikaryon. Its subcellular location is the cell projection. The protein localises to the growth cone. It localises to the clathrin-coated pit. The protein resides in the early endosome. It is found in the cytoplasmic vesicle. Its subcellular location is the endoplasmic reticulum. The protein localises to the golgi apparatus. It localises to the cell surface. The protein resides in the nucleus. It is found in the cytoplasm. Its subcellular location is the secreted. Its function is as follows. Functions as a cell surface receptor and performs physiological functions on the surface of neurons relevant to neurite growth, neuronal adhesion and axonogenesis. Interaction between APP molecules on neighboring cells promotes synaptogenesis. Involved in cell mobility and transcription regulation through protein-protein interactions. Can promote transcription activation through binding to APBB1-KAT5 and inhibit Notch signaling through interaction with Numb. Couples to apoptosis-inducing pathways such as those mediated by G(o) and JIP. Inhibits G(o)-alpha ATPase activity. Acts as a kinesin I membrane receptor, mediating the axonal transport of beta-secretase and presenilin 1. By acting as a kinesin I membrane receptor, plays a role in axonal anterograde transport of cargo towards synapses in axons. May be involved in copper homeostasis/oxidative stress through copper ion reduction. Can regulate neurite outgrowth through binding to components of the extracellular matrix such as heparin and collagen I and IV. The splice isoforms that contain the BPTI domain possess protease inhibitor activity. Induces a AGER-dependent pathway that involves activation of p38 MAPK, resulting in internalization of amyloid-beta peptide and leading to mitochondrial dysfunction in cultured mitochondrial dysfunction in cultured cortical neurons. Provides Cu(2+) ions for GPC1 which are required for release of nitric oxide (NO) and subsequent degradation of the heparan sulfate chains on GPC1. Functionally, amyloid-beta peptides are lipophilic metal chelators with metal-reducing activity. Binds transient metals such as copper, zinc and iron. Rat and mouse amyloid-beta peptides bind only weakly transient metals and have little reducing activity due to substitutions of transient metal chelating residues. Amyloid-beta protein 42 may activate mononuclear phagocytes in the brain and elicits inflammatory responses. Promotes both tau aggregation and TPK II-mediated phosphorylation. Also binds GPC1 in lipid rafts. Appicans elicit adhesion of neural cells to the extracellular matrix and may regulate neurite outgrowth in the brain. In terms of biological role, the gamma-CTF peptides as well as the caspase-cleaved peptides, including C31, are potent enhancers of neuronal apoptosis. The protein is Amyloid-beta precursor protein of Rattus norvegicus (Rat).